The following is a 690-amino-acid chain: Elongation factor G (690 aa).

Residues 8–283 (ERYRNFGIMA…AVVDFMPSPL (276 aa)) enclose the tr-type G domain. GTP is bound by residues 17–24 (AHIDAGKT), 81–85 (DTPGH), and 135–138 (NKLD).

It belongs to the TRAFAC class translation factor GTPase superfamily. Classic translation factor GTPase family. EF-G/EF-2 subfamily.

The protein localises to the cytoplasm. Catalyzes the GTP-dependent ribosomal translocation step during translation elongation. During this step, the ribosome changes from the pre-translocational (PRE) to the post-translocational (POST) state as the newly formed A-site-bound peptidyl-tRNA and P-site-bound deacylated tRNA move to the P and E sites, respectively. Catalyzes the coordinated movement of the two tRNA molecules, the mRNA and conformational changes in the ribosome. The protein is Elongation factor G of Novosphingobium aromaticivorans (strain ATCC 700278 / DSM 12444 / CCUG 56034 / CIP 105152 / NBRC 16084 / F199).